The sequence spans 252 residues: Imidazole glycerol phosphate synthase subunit HisF (252 aa).

Catalysis depends on residues D11 and D130.

This sequence belongs to the HisA/HisF family. In terms of assembly, heterodimer of HisH and HisF.

The protein localises to the cytoplasm. The catalysed reaction is 5-[(5-phospho-1-deoxy-D-ribulos-1-ylimino)methylamino]-1-(5-phospho-beta-D-ribosyl)imidazole-4-carboxamide + L-glutamine = D-erythro-1-(imidazol-4-yl)glycerol 3-phosphate + 5-amino-1-(5-phospho-beta-D-ribosyl)imidazole-4-carboxamide + L-glutamate + H(+). Its pathway is amino-acid biosynthesis; L-histidine biosynthesis; L-histidine from 5-phospho-alpha-D-ribose 1-diphosphate: step 5/9. IGPS catalyzes the conversion of PRFAR and glutamine to IGP, AICAR and glutamate. The HisF subunit catalyzes the cyclization activity that produces IGP and AICAR from PRFAR using the ammonia provided by the HisH subunit. The polypeptide is Imidazole glycerol phosphate synthase subunit HisF (Thermococcus gammatolerans (strain DSM 15229 / JCM 11827 / EJ3)).